The following is a 517-amino-acid chain: MSELKLPSIDYVALAPTLILLGAALVGVLVEAFVPRRLRHMVQLTVAMLAVLSALTMVVVNANDRLITIGGAIAVDGPALFLQGAILVLAAMALLLIGERSVERGGAFVAQAAVTAESADDRRQAEGRPGATEVYPLTSFAVGGMLIFVAANDLLTMFIALEVLSLPLYLLCALARRRRLLSQEAAMKYFLLGAYASAFFLFGVALVYGYTAGVPDRAAGVDFATIDAAVSESQSSSVLLFGGMALIAIGLLFKAAAAPFHVWTPDVYQGAPTPITGFMAACTKVAAFGALLRVFHVAFEGARWDFTPILGVVAVLTMLVGAVLAVTQTDIKRLLAYSSIANAGYLLVGVLAPSSEGVSGTMFYLVAYGFSVLAAFAVVTLVRDGDGEATHLSRWAGLGQRSPFYAGLFTFILLAFAGIPLTSGFTSKFAVFSAAFDGGQGWLVVAGVLTSMVLAFPYLRVVVLMWLSEPGESTPAVVMPGWLTSAALTIGVVATLVLGVVPQPLLDLAAGAAEFVR.

Transmembrane regions (helical) follow at residues 14–34 (LAPT…EAFV), 40–60 (HMVQ…MVVV), 77–97 (GPAL…LLLI), 131–151 (ATEV…FVAA), 154–174 (LLTM…LCAL), 189–209 (YFLL…LVYG), 238–258 (VLLF…AAAA), 272–292 (PTPI…GALL), 306–326 (FTPI…VLAV), 334–354 (LLAY…LAPS), 362–382 (MFYL…VTLV), 404–424 (FYAG…LTSG), 451–471 (SMVL…SEPG), and 481–501 (GWLT…LGVV).

It belongs to the complex I subunit 2 family. NDH-1 is composed of 14 different subunits. Subunits NuoA, H, J, K, L, M, N constitute the membrane sector of the complex.

It is found in the cell membrane. It catalyses the reaction a quinone + NADH + 5 H(+)(in) = a quinol + NAD(+) + 4 H(+)(out). Functionally, NDH-1 shuttles electrons from NADH, via FMN and iron-sulfur (Fe-S) centers, to quinones in the respiratory chain. The immediate electron acceptor for the enzyme in this species is believed to be a menaquinone. Couples the redox reaction to proton translocation (for every two electrons transferred, four hydrogen ions are translocated across the cytoplasmic membrane), and thus conserves the redox energy in a proton gradient. The protein is NADH-quinone oxidoreductase subunit N of Salinispora arenicola (strain CNS-205).